Here is a 271-residue protein sequence, read N- to C-terminus: Ribonuclease HII (271 aa).

Residues 84-271 (VLIAGVDEVG…HRMSFLSNYI (188 aa)) form the RNase H type-2 domain. A divalent metal cation is bound by residues Asp-90, Glu-91, and Asp-187.

The protein belongs to the RNase HII family. Requires Mn(2+) as cofactor. It depends on Mg(2+) as a cofactor.

It is found in the cytoplasm. The catalysed reaction is Endonucleolytic cleavage to 5'-phosphomonoester.. Endonuclease that specifically degrades the RNA of RNA-DNA hybrids. This chain is Ribonuclease HII, found in Clostridium tetani (strain Massachusetts / E88).